Here is a 456-residue protein sequence, read N- to C-terminus: Probable flavin-containing monoamine oxidase A (456 aa).

Residue cysteine 394 is modified to S-8alpha-FAD cysteine.

This sequence belongs to the flavin monoamine oxidase family. The cofactor is FAD.

The catalysed reaction is a secondary aliphatic amine + O2 + H2O = a primary amine + an aldehyde + H2O2. The sequence is that of Probable flavin-containing monoamine oxidase A (maoA) from Dictyostelium discoideum (Social amoeba).